Consider the following 245-residue polypeptide: Bis(5'-nucleosyl)-tetraphosphatase PrpE [asymmetrical] (245 aa).

The protein belongs to the PrpE family. Ni(2+) serves as cofactor.

The enzyme catalyses P(1),P(4)-bis(5'-guanosyl) tetraphosphate + H2O = GMP + GTP + 2 H(+). In terms of biological role, asymmetrically hydrolyzes Ap4p to yield AMP and ATP. The sequence is that of Bis(5'-nucleosyl)-tetraphosphatase PrpE [asymmetrical] from Geobacillus sp. (strain WCH70).